A 102-amino-acid chain; its full sequence is MNKIRKGDEVIVLTGKDKGKRGTVQAVLGDKVAVQGVNIAKKHARPNPMLGTTGGVVDKVMPLHISNVALVDANGKPSRVGIKVEDGKRVRVLKTTGAVVAA.

It belongs to the universal ribosomal protein uL24 family. Part of the 50S ribosomal subunit.

In terms of biological role, one of two assembly initiator proteins, it binds directly to the 5'-end of the 23S rRNA, where it nucleates assembly of the 50S subunit. One of the proteins that surrounds the polypeptide exit tunnel on the outside of the subunit. The sequence is that of Large ribosomal subunit protein uL24 from Cupriavidus necator (strain ATCC 17699 / DSM 428 / KCTC 22496 / NCIMB 10442 / H16 / Stanier 337) (Ralstonia eutropha).